The sequence spans 275 residues: NH(3)-dependent NAD(+) synthetase (275 aa).

46-53 serves as a coordination point for ATP; the sequence is GISGGQDS. A Mg(2+)-binding site is contributed by aspartate 52. Residue arginine 140 participates in deamido-NAD(+) binding. An ATP-binding site is contributed by threonine 160. Glutamate 165 is a binding site for Mg(2+). Residues lysine 173 and aspartate 180 each contribute to the deamido-NAD(+) site. ATP contacts are provided by lysine 189 and threonine 211. 260–261 contacts deamido-NAD(+); it reads HK.

Belongs to the NAD synthetase family. Homodimer.

It catalyses the reaction deamido-NAD(+) + NH4(+) + ATP = AMP + diphosphate + NAD(+) + H(+). The protein operates within cofactor biosynthesis; NAD(+) biosynthesis; NAD(+) from deamido-NAD(+) (ammonia route): step 1/1. Its function is as follows. Catalyzes the ATP-dependent amidation of deamido-NAD to form NAD. Uses ammonia as a nitrogen source. The sequence is that of NH(3)-dependent NAD(+) synthetase from Salmonella agona (strain SL483).